A 76-amino-acid chain; its full sequence is Protein krueppel (76 aa).

2 C2H2-type zinc fingers span residues Phe11–His33 and Tyr39–His61.

This sequence belongs to the krueppel C2H2-type zinc-finger protein family.

It localises to the nucleus. Krueppel is a gap class segmentation protein. The protein is Protein krueppel (Kr) of Manduca sexta (Tobacco hawkmoth).